The chain runs to 434 residues: Histidinol dehydrogenase (434 aa).

Substrate is bound by residues S242, Q264, and H267. Zn(2+) is bound by residues Q264 and H267. Residues E332 and H333 each act as proton acceptor in the active site. Residues H333, D366, E420, and H425 each contribute to the substrate site. D366 lines the Zn(2+) pocket. H425 lines the Zn(2+) pocket.

Belongs to the histidinol dehydrogenase family. Zn(2+) is required as a cofactor.

It carries out the reaction L-histidinol + 2 NAD(+) + H2O = L-histidine + 2 NADH + 3 H(+). It participates in amino-acid biosynthesis; L-histidine biosynthesis; L-histidine from 5-phospho-alpha-D-ribose 1-diphosphate: step 9/9. In terms of biological role, catalyzes the sequential NAD-dependent oxidations of L-histidinol to L-histidinaldehyde and then to L-histidine. The protein is Histidinol dehydrogenase of Oleidesulfovibrio alaskensis (strain ATCC BAA-1058 / DSM 17464 / G20) (Desulfovibrio alaskensis).